We begin with the raw amino-acid sequence, 37 residues long: Large ribosomal subunit protein bL36c (37 aa).

Belongs to the bacterial ribosomal protein bL36 family.

The protein localises to the plastid. It localises to the chloroplast. This chain is Large ribosomal subunit protein bL36c, found in Lepidium virginicum (Virginia pepperweed).